The primary structure comprises 440 residues: Adenylosuccinate lyase (440 aa).

N(6)-(1,2-dicarboxyethyl)-AMP-binding positions include 4 to 5 (RY), 67 to 69 (KHD), and 93 to 94 (TS). The active-site Proton donor/acceptor is the histidine 141. Glutamine 212 provides a ligand contact to N(6)-(1,2-dicarboxyethyl)-AMP. Residue serine 262 is the Proton donor/acceptor of the active site. N(6)-(1,2-dicarboxyethyl)-AMP-binding positions include serine 263, 268–270 (KRN), asparagine 276, and 307–311 (SVERF).

This sequence belongs to the lyase 1 family. Adenylosuccinate lyase subfamily. In terms of assembly, homotetramer. Residues from neighboring subunits contribute catalytic and substrate-binding residues to each active site.

It catalyses the reaction N(6)-(1,2-dicarboxyethyl)-AMP = fumarate + AMP. It carries out the reaction (2S)-2-[5-amino-1-(5-phospho-beta-D-ribosyl)imidazole-4-carboxamido]succinate = 5-amino-1-(5-phospho-beta-D-ribosyl)imidazole-4-carboxamide + fumarate. Its pathway is purine metabolism; AMP biosynthesis via de novo pathway; AMP from IMP: step 2/2. It participates in purine metabolism; IMP biosynthesis via de novo pathway; 5-amino-1-(5-phospho-D-ribosyl)imidazole-4-carboxamide from 5-amino-1-(5-phospho-D-ribosyl)imidazole-4-carboxylate: step 2/2. In terms of biological role, catalyzes two reactions in de novo purine nucleotide biosynthesis. Catalyzes the breakdown of 5-aminoimidazole- (N-succinylocarboxamide) ribotide (SAICAR or 2-[5-amino-1-(5-phospho-beta-D-ribosyl)imidazole-4-carboxamido]succinate) to 5-aminoimidazole-4-carboxamide ribotide (AICAR or 5-amino-1-(5-phospho-beta-D-ribosyl)imidazole-4-carboxamide) and fumarate, and of adenylosuccinate (ADS or N(6)-(1,2-dicarboxyethyl)-AMP) to adenosine monophosphate (AMP) and fumarate. This Helicobacter pylori (strain ATCC 700392 / 26695) (Campylobacter pylori) protein is Adenylosuccinate lyase (purB).